The sequence spans 726 residues: Disintegrin and metalloproteinase domain-containing protein 20 (726 aa).

The N-terminal stretch at 1–31 (MAVGEPLVHIRVTLLLLWFGMFLSISGHSQA) is a signal peptide. Residues 32 to 206 (RPSQYFTSPE…SSFVGWWTHQ (175 aa)) constitute a propeptide that is removed on maturation. The Cysteine switch motif lies at 171–178 (MRCGLTEE). Position 173 (Cys173) interacts with Zn(2+). N-linked (GlcNAc...) asparagine glycans are attached at residues Asn191 and Asn226. Residues 207 to 400 (RFVELVVVVD…SGLCIQPPPY (194 aa)) enclose the Peptidase M12B domain. Over 207–693 (RFVELVVVVD…GLNVMGKLRY (487 aa)) the chain is Extracellular. Disulfide bonds link Cys317-Cys394, Cys357-Cys379, and Cys359-Cys364. His342 is a Zn(2+) binding site. Glu343 is an active-site residue. 2 residues coordinate Zn(2+): His346 and His352. N-linked (GlcNAc...) asparagine glycosylation is found at Asn378, Asn438, Asn479, and Asn587. Residues 407–493 (LKYCGNLVVE…QCPDDVYVQD (87 aa)) form the Disintegrin domain. A disulfide bridge links Cys465 with Cys485. 3 cysteine pairs are disulfide-bonded: Cys635-Cys646, Cys640-Cys652, and Cys654-Cys663. In terms of domain architecture, EGF-like spans 635 to 663 (CQPKTCNMRGICNNKQHCHCNHEWAPPYC). Residues 694 to 714 (LSLLCLLPLVAFLLFCLHVLF) form a helical membrane-spanning segment. Over 715 to 726 (KKRTKSKEDEEG) the chain is Cytoplasmic.

Zn(2+) is required as a cofactor. In terms of processing, has no obvious cleavage site for furin endopeptidase, suggesting that the proteolytic processing is regulated. In terms of tissue distribution, testis specific.

Its subcellular location is the membrane. In terms of biological role, may be involved in sperm maturation and/or fertilization. In Homo sapiens (Human), this protein is Disintegrin and metalloproteinase domain-containing protein 20 (ADAM20).